A 515-amino-acid chain; its full sequence is MSNDEKQLTKEEMKAIKLQAKEEAKMNDLLKERRQKLSDAQERGKDPFDVYKVERTHTSKQIVDNYDELEDKIVTVAGRLMSKRVHGKAGFSDIYDRYGKIQLYLKIDDVGEEKLKEFKTFDIGDFVVITGKVFKTKTGEITLHVTKLELIAKSLKPLPEKFHGLKDPDLKYRQRYVDLIINQDVRETFMKRTAIIKAVREFLDNKDYLEVETPVLSTIASGASARPFSTHHNALDLDMHLRIATELYLKRLIVGGFEKVYEIGKDFRNEGIDVRHNPEFTMIELYEAYADYNDMMEITENMVAYACQKVNGTTKITYEGTEIDLTPPWRRVTMVDIVKEHSGIDFSTVKTDEEAREIAKEKKLELKKELKDCTKGDILNALFEEYGEKKLIQPTFVCDYPVEISPLTKKKRGNPEYTERFEGFIYGREICNAYSELNDPIVQKDRFMQQLKERELGDDEAYQMDDDFINALEIGMPPTGGMGMGMDRLVMFLTDSPSIRDVILFPTMKPTPNRD.

Mg(2+) contacts are provided by glutamate 422 and glutamate 429.

The protein belongs to the class-II aminoacyl-tRNA synthetase family. In terms of assembly, homodimer. Requires Mg(2+) as cofactor.

It localises to the cytoplasm. It carries out the reaction tRNA(Lys) + L-lysine + ATP = L-lysyl-tRNA(Lys) + AMP + diphosphate. The chain is Lysine--tRNA ligase from Clostridium acetobutylicum (strain ATCC 824 / DSM 792 / JCM 1419 / IAM 19013 / LMG 5710 / NBRC 13948 / NRRL B-527 / VKM B-1787 / 2291 / W).